A 101-amino-acid polypeptide reads, in one-letter code: NAD(P)H-quinone oxidoreductase subunit 4L, chloroplastic (101 aa).

3 helical membrane-spanning segments follow: residues 2 to 22, 32 to 52, and 61 to 81; these read ILEH…YGLI, MCLE…SDFF, and IFCI…LAIV.

This sequence belongs to the complex I subunit 4L family. As to quaternary structure, NDH is composed of at least 16 different subunits, 5 of which are encoded in the nucleus.

It localises to the plastid. It is found in the chloroplast thylakoid membrane. It carries out the reaction a plastoquinone + NADH + (n+1) H(+)(in) = a plastoquinol + NAD(+) + n H(+)(out). The enzyme catalyses a plastoquinone + NADPH + (n+1) H(+)(in) = a plastoquinol + NADP(+) + n H(+)(out). NDH shuttles electrons from NAD(P)H:plastoquinone, via FMN and iron-sulfur (Fe-S) centers, to quinones in the photosynthetic chain and possibly in a chloroplast respiratory chain. The immediate electron acceptor for the enzyme in this species is believed to be plastoquinone. Couples the redox reaction to proton translocation, and thus conserves the redox energy in a proton gradient. The sequence is that of NAD(P)H-quinone oxidoreductase subunit 4L, chloroplastic from Aethionema cordifolium (Lebanon stonecress).